A 359-amino-acid chain; its full sequence is Probable mannitol dehydrogenase (359 aa).

The Zn(2+) site is built by C48, H70, C101, C104, C107, C115, and C164.

The protein belongs to the zinc-containing alcohol dehydrogenase family. The cofactor is Zn(2+).

The enzyme catalyses D-mannitol + NAD(+) = D-mannose + NADH + H(+). Its function is as follows. Oxidizes mannitol to mannose. Provides the initial step by which translocated mannitol is committed to central metabolism and, by regulating mannitol pool size, is important in regulating salt tolerance at the cellular level. This chain is Probable mannitol dehydrogenase (CAD), found in Fragaria ananassa (Strawberry).